The chain runs to 220 residues: MPGLTLGDVVPDLELDTTHGKIRLHDFVGDAYVIIFSHPADFTPVCTTELSEMAGYAGEFDKRGVKLLGFSCDDVESHKDWIKDIEAYKPGRRVGFPIVADPDREAIRQLNMIDADEKDTAGGELPNRALHIVGPDKKVKLSFLFPACTGRNMAEVLRATDALLTAARHRVATPVNWKPGERVVIPPGVSDEEAKARFPAGFETAQLPSNKCYLRFTQVD.

The Thioredoxin domain occupies 4–165 (LTLGDVVPDL…VLRATDALLT (162 aa)). Cysteine 46 (cysteine sulfenic acid (-SOH) intermediate) is an active-site residue. Positions 195–218 (KARFPAGFETAQLPSNKCYLRFTQ) match the Bipartite nuclear localization signal motif.

It belongs to the peroxiredoxin family. Prx6 subfamily.

Its subcellular location is the nucleus. The protein localises to the cytoplasm. The catalysed reaction is a hydroperoxide + [thioredoxin]-dithiol = an alcohol + [thioredoxin]-disulfide + H2O. Thiol-specific peroxidase that catalyzes the reduction of hydrogen peroxide and organic hydroperoxides to water and alcohols, respectively. Seems to contribute to the inhibition of germination during stress. The protein is 1-Cys peroxiredoxin B of Oryza sativa subsp. japonica (Rice).